A 223-amino-acid polypeptide reads, in one-letter code: FAD-dependent monooxygenase imqC (223 aa).

Residues 139–141, Y189, and D210 contribute to the FAD site; that span reads RFY.

Belongs to the PheA/TfdB FAD monooxygenase family.

It functions in the pathway secondary metabolite biosynthesis. FAD-dependent monooxygenase; part of the gene cluster that mediates the biosynthesis of imizoquins A to D, tripeptide-derived alkaloids that serve a protective role against oxidative stress that are essential for normal germination. ImqB is a canonical three-module NRPS that assembles the tripeptide backbone of the imizoquins via condensation of Trp, Tyr, and Leu-derived precursors. N-methylation by imqF and phenol oxidation by imqC, followed by cyclization via the FAD-dependent oxidase imqH carry out the three-step transformation of L-tyrosine into tetrahydroisoquinoline. Importantly, this sequence requires the presence of a free amine in the tyrosine moiety, indicating that isoquinoline formation occurs prior to peptide bond formation. The imidazolidin-4-one ring of imizoquins could form following additional oxidation of the methyl-derived bridgehead carbon by imqH. Lastly, O-methylation by imqG and leucine hydroxylation by imqE complete biosynthesis of the imizoquins. This is FAD-dependent monooxygenase imqC from Aspergillus flavus (strain ATCC 200026 / FGSC A1120 / IAM 13836 / NRRL 3357 / JCM 12722 / SRRC 167).